A 297-amino-acid chain; its full sequence is MVHQVLYRALVSTKWLAESVRAGKVGPGLRVLDASWYSPGTREARKEYLERHVPGASFFDIEECRDKASPYEVMLPSEAGFADYVGSLGISNDTHVVVYDGDDLGSFYAPRVWWMFRVFGHRTVSVLNGGFRNWLKEGHPVTSEPSRPEPAIFKATLNRSLLKTYEQVLENLESKRFQLVDSRAQGRYLGTQPEPDAVGLDSGHIRGSVNMPFMNFLTEDGFEKSPEELRAMFEAKKVDLTKPLIATCRKGVTACHIALAAYLCGKPDVAIYDGSWFEWFHRAPPETWVSQGKGGKA.

Lysine 14 is modified (N6-acetyllysine; alternate). Lysine 14 is modified (N6-succinyllysine; alternate). The Rhodanese 1 domain maps to 25–143 (VGPGLRVLDA…WLKEGHPVTS (119 aa)). Serine 35 carries an O-linked (GlcNAc) serine glycan. Residue serine 38 is modified to Phosphoserine. An N6-acetyllysine; alternate modification is found at lysine 136. Lysine 136 is modified (N6-succinyllysine; alternate). The hinge stretch occupies residues 144–159 (EPSRPEPAIFKATLNR). Position 163 is an N6-acetyllysine (lysine 163). Residues 173-288 (ESKRFQLVDS…WFHRAPPETW (116 aa)) enclose the Rhodanese 2 domain. Residue lysine 175 is modified to N6-acetyllysine; alternate. Lysine 175 bears the N6-succinyllysine; alternate mark. Arginine 187 contributes to the substrate binding site. Lysine 224 bears the N6-acetyllysine; alternate mark. An N6-succinyllysine; alternate modification is found at lysine 224. Position 236 is an N6-acetyllysine (lysine 236). At lysine 237 the chain carries N6-acetyllysine; alternate. N6-succinyllysine; alternate is present on lysine 237. Catalysis depends on cysteine 248, which acts as the Cysteine persulfide intermediate. Position 250 (lysine 250) interacts with substrate.

Monomer. Expressed in numerous tissues.

The protein localises to the mitochondrion matrix. It carries out the reaction thiosulfate + hydrogen cyanide = thiocyanate + sulfite + 2 H(+). Its function is as follows. Together with MRPL18, acts as a mitochondrial import factor for the cytosolic 5S rRNA. Only the nascent unfolded cytoplasmic form is able to bind to the 5S rRNA. Formation of iron-sulfur complexes and cyanide detoxification. Binds molecular oxygen and sulfur. This is Thiosulfate sulfurtransferase (TST) from Bos taurus (Bovine).